The chain runs to 1343 residues: DNA-directed RNA polymerase subunit beta (1343 aa).

It belongs to the RNA polymerase beta chain family. In terms of assembly, the RNAP catalytic core consists of 2 alpha, 1 beta, 1 beta' and 1 omega subunit. When a sigma factor is associated with the core the holoenzyme is formed, which can initiate transcription.

The enzyme catalyses RNA(n) + a ribonucleoside 5'-triphosphate = RNA(n+1) + diphosphate. In terms of biological role, DNA-dependent RNA polymerase catalyzes the transcription of DNA into RNA using the four ribonucleoside triphosphates as substrates. This is DNA-directed RNA polymerase subunit beta from Shewanella baltica (strain OS223).